Reading from the N-terminus, the 150-residue chain is Large ribosomal subunit protein bL9 (150 aa).

This sequence belongs to the bacterial ribosomal protein bL9 family.

Binds to the 23S rRNA. This Photorhabdus laumondii subsp. laumondii (strain DSM 15139 / CIP 105565 / TT01) (Photorhabdus luminescens subsp. laumondii) protein is Large ribosomal subunit protein bL9.